We begin with the raw amino-acid sequence, 244 residues long: Krueppel-like factor 9 (244 aa).

2 disordered regions span residues 26-51 (EHGGAPEAERLRLPEREVTKEHGDPG) and 79-143 (PSVC…EKRH). Residues 32–51 (EAERLRLPEREVTKEHGDPG) are compositionally biased toward basic and acidic residues. Phosphoserine is present on Ser-122. Basic residues predominate over residues 134-143 (KGKHASEKRH). 3 consecutive C2H2-type zinc fingers follow at residues 143-167 (HKCPYSGCGKVYGKSSHLKAHYRVH), 173-197 (FPCTWPDCLKKFSRSDELTRHYRTH), and 203-225 (FRCPLCEKRFMRSDHLTKHARRH).

It belongs to the Sp1 C2H2-type zinc-finger protein family. Interacts with ZZEF1.

Its subcellular location is the nucleus. In terms of biological role, transcription factor that binds to GC box promoter elements. Selectively activates mRNA synthesis from genes containing tandem repeats of GC boxes but represses genes with a single GC box. Acts as an epidermal circadian transcription factor regulating keratinocyte proliferation. This Mus musculus (Mouse) protein is Krueppel-like factor 9 (Klf9).